We begin with the raw amino-acid sequence, 834 residues long: Glycerol-3-phosphate acyltransferase (834 aa).

Residues C304–M309 carry the HXXXXD motif motif. The disordered stretch occupies residues S800–S834.

It belongs to the GPAT/DAPAT family.

The protein localises to the cell inner membrane. The enzyme catalyses sn-glycerol 3-phosphate + an acyl-CoA = a 1-acyl-sn-glycero-3-phosphate + CoA. It functions in the pathway phospholipid metabolism; CDP-diacylglycerol biosynthesis; CDP-diacylglycerol from sn-glycerol 3-phosphate: step 1/3. In Yersinia pseudotuberculosis serotype I (strain IP32953), this protein is Glycerol-3-phosphate acyltransferase.